A 356-amino-acid chain; its full sequence is Holliday junction branch migration complex subunit RuvB (356 aa).

Residues 4–191 form a large ATPase domain (RuvB-L) region; that stretch reads TDKLATEQRI…FGIVARLEFY (188 aa). Residues Leu-30, Arg-31, Gly-72, Lys-75, Thr-76, Thr-77, 138 to 140, Arg-181, Tyr-191, and Arg-228 contribute to the ATP site; that span reads EDY. Residue Thr-76 participates in Mg(2+) binding. Residues 192 to 262 are small ATPAse domain (RuvB-S); it reads DADQLSRIVR…VADAALAMLD (71 aa). Residues 265–356 form a head domain (RuvB-H) region; it reads PVGFDLMDRK…RDEWDTPDGK (92 aa). Positions 301, 320, and 325 each coordinate DNA.

It belongs to the RuvB family. In terms of assembly, homohexamer. Forms an RuvA(8)-RuvB(12)-Holliday junction (HJ) complex. HJ DNA is sandwiched between 2 RuvA tetramers; dsDNA enters through RuvA and exits via RuvB. An RuvB hexamer assembles on each DNA strand where it exits the tetramer. Each RuvB hexamer is contacted by two RuvA subunits (via domain III) on 2 adjacent RuvB subunits; this complex drives branch migration. In the full resolvosome a probable DNA-RuvA(4)-RuvB(12)-RuvC(2) complex forms which resolves the HJ.

It is found in the cytoplasm. The catalysed reaction is ATP + H2O = ADP + phosphate + H(+). Functionally, the RuvA-RuvB-RuvC complex processes Holliday junction (HJ) DNA during genetic recombination and DNA repair, while the RuvA-RuvB complex plays an important role in the rescue of blocked DNA replication forks via replication fork reversal (RFR). RuvA specifically binds to HJ cruciform DNA, conferring on it an open structure. The RuvB hexamer acts as an ATP-dependent pump, pulling dsDNA into and through the RuvAB complex. RuvB forms 2 homohexamers on either side of HJ DNA bound by 1 or 2 RuvA tetramers; 4 subunits per hexamer contact DNA at a time. Coordinated motions by a converter formed by DNA-disengaged RuvB subunits stimulates ATP hydrolysis and nucleotide exchange. Immobilization of the converter enables RuvB to convert the ATP-contained energy into a lever motion, pulling 2 nucleotides of DNA out of the RuvA tetramer per ATP hydrolyzed, thus driving DNA branch migration. The RuvB motors rotate together with the DNA substrate, which together with the progressing nucleotide cycle form the mechanistic basis for DNA recombination by continuous HJ branch migration. Branch migration allows RuvC to scan DNA until it finds its consensus sequence, where it cleaves and resolves cruciform DNA. This Burkholderia cenocepacia (strain ATCC BAA-245 / DSM 16553 / LMG 16656 / NCTC 13227 / J2315 / CF5610) (Burkholderia cepacia (strain J2315)) protein is Holliday junction branch migration complex subunit RuvB.